The primary structure comprises 133 residues: Small ribosomal subunit protein uS9 (133 aa).

The disordered stretch occupies residues 97-133 (MKQELKSQGFLTRDPRKKERKKYGRKKARKSFQFSKR). The span at 114 to 133 (KERKKYGRKKARKSFQFSKR) shows a compositional bias: basic residues.

Belongs to the universal ribosomal protein uS9 family.

The polypeptide is Small ribosomal subunit protein uS9 (rpsI) (Chlamydia muridarum (strain MoPn / Nigg)).